The sequence spans 465 residues: Probable spore coat protein DDB_G0283555 (465 aa).

The N-terminal stretch at 1-22 is a signal peptide; sequence MRINNLLVCLVLVFSTLSISNA. In terms of domain architecture, DSCP-N spans 35 to 153; it reads RNCDSLSEDQ…RYPVCKGGGG (119 aa). Follistatin-like domains are found at residues 160–182, 195–217, 229–251, 257–280, 287–309, 318–340, and 435–458; these read PCKN…AYCV, LCKA…ACCV, LCDA…ANCV, ECEH…PHCQ, LCRN…PTCI, PCRD…PSCV, and LCEF…PVCL.

In terms of biological role, may contribute to the structure of the coat at the interface between the middle, cellulosic layer and the outer, electron-dense, proteinaceous layer. The polypeptide is Probable spore coat protein DDB_G0283555 (Dictyostelium discoideum (Social amoeba)).